Consider the following 86-residue polypeptide: YcgL domain-containing protein XCC3997 (86 aa).

A YcgL domain is found at 1-83; the sequence is MHAYVYKSQR…PKTVVLAGEC (83 aa).

The chain is YcgL domain-containing protein XCC3997 from Xanthomonas campestris pv. campestris (strain ATCC 33913 / DSM 3586 / NCPPB 528 / LMG 568 / P 25).